Here is a 214-residue protein sequence, read N- to C-terminus: Cell division protein B1 (214 aa).

Its function is as follows. Part of a cell division machinery. In Sulfolobus acidocaldarius (strain ATCC 33909 / DSM 639 / JCM 8929 / NBRC 15157 / NCIMB 11770), this protein is Cell division protein B1.